Reading from the N-terminus, the 654-residue chain is Import motor subunit, mitochondrial (654 aa).

The N-terminal 23 residues, 1–23 (MLAAKNILNRSSLSSSFRIATRL), are a transit peptide targeting the mitochondrion. Thr-330 carries the post-translational modification Phosphothreonine. Residues 629 to 654 (EQLYKNDSNNNNNNNGNNAESGETKQ) form a disordered region. Residues 637-646 (NNNNNNNGNN) show a composition bias toward low complexity.

Belongs to the heat shock protein 70 family. As to quaternary structure, component of the PAM complex, at least composed of SSC1 (mtHsp70), MGE1, TIM44, PAM16/TIM16, PAM17 and PAM18/TIM14. In the complex, SSC1 interacts directly with PAM18 and TIM44. Interacts with NAP1.

It is found in the mitochondrion matrix. The enzyme catalyses ATP + H2O = ADP + phosphate + H(+). In terms of biological role, essential component of the PAM complex, a complex required for the translocation of transit peptide-containing proteins from the inner membrane into the mitochondrial matrix in an ATP-dependent manner. Constitutes the ATP-driven core of the motor and binds the precursor preprotein. Required for the import of the processed frataxin homolog YFH1 into the mitochondrion. In Saccharomyces cerevisiae (strain ATCC 204508 / S288c) (Baker's yeast), this protein is Import motor subunit, mitochondrial.